The primary structure comprises 297 residues: tRNA pseudouridine synthase A (297 aa).

Aspartate 57 acts as the Nucleophile in catalysis. Tyrosine 115 contributes to the substrate binding site.

It belongs to the tRNA pseudouridine synthase TruA family. Homodimer.

It carries out the reaction uridine(38/39/40) in tRNA = pseudouridine(38/39/40) in tRNA. Its function is as follows. Formation of pseudouridine at positions 38, 39 and 40 in the anticodon stem and loop of transfer RNAs. The sequence is that of tRNA pseudouridine synthase A from Nitratidesulfovibrio vulgaris (strain ATCC 29579 / DSM 644 / CCUG 34227 / NCIMB 8303 / VKM B-1760 / Hildenborough) (Desulfovibrio vulgaris).